Consider the following 651-residue polypeptide: PTS system sucrose-specific EIIBCA component (651 aa).

A PTS EIIB type-1 domain is found at 3–86 (HQEVADRVLN…IVKTGLKEVT (84 aa)). The active-site Phosphocysteine intermediate; for EIIB activity is the Cys-25. A run of 10 helical transmembrane segments spans residues 109–129 (VLSD…LLMA), 158–178 (MINA…GFSA), 182–202 (FGGN…PSLV), 204–224 (GYSV…VFGL), 226–246 (VAQA…FILA), 264–284 (FTPM…VGPV), 303–323 (TGWI…ITGL), 345–365 (FIFP…LAIF), 404–424 (FVFA…FHVL), and 444–464 (IPAF…PTFI). The 361-residue stretch at 121 to 481 (LVAGGLLMAL…DDRDQVKSPA (361 aa)) folds into the PTS EIIC type-1 domain. The region spanning 510–614 (DQVFSAEIMG…DPTVMLIVTN (105 aa)) is the PTS EIIA type-1 domain. His-562 (tele-phosphohistidine intermediate; for EIIA activity) is an active-site residue.

The protein localises to the cell membrane. The catalysed reaction is N(pros)-phospho-L-histidyl-[protein](out) + sucrose = sucrose 6(G)-phosphate(in) + L-histidyl-[protein]. Functionally, the phosphoenolpyruvate-dependent sugar phosphotransferase system (sugar PTS), a major carbohydrate active transport system, catalyzes the phosphorylation of incoming sugar substrates concomitantly with their translocation across the cell membrane. This system is involved in sucrose transport. The protein is PTS system sucrose-specific EIIBCA component (scrA) of Pediococcus pentosaceus.